The sequence spans 1665 residues: Protein scribble homolog (1665 aa).

Residues 1–804 (MLKCIPLWRC…MRVWRERMVE (804 aa)) are sufficient for targeting to adherens junction and to inhibit cell proliferation. Position 37 is a phosphoserine (Ser-37). LRR repeat units follow at residues 37–58 (SLEE…FFRL), 60–81 (NLRK…VANF), 83–104 (QLVE…IKFC), 106–127 (ALEI…FTQL), 129–150 (SLAH…VGNL), 152–174 (NLVT…SFLV), 175–197 (KLEQ…GALP), 198–219 (NLRE…LGNL), 221–243 (RLVC…GGLA), 244–265 (LLTD…IGQL), 267–288 (QLSI…IGDC), 290–312 (NLSE…GKLT), 313–334 (KLTN…IGGC), 336–357 (ALSV…LAHT), 359–381 (ELHV…THLN), and 382–402 (LKAL…QTED). At Thr-378 the chain carries Phosphothreonine. Disordered stretches follow at residues 422–615 (PSLE…HFKI) and 635–689 (REGP…SAPS). Residues 428–437 (GQQSSPSESC) show a composition bias toward polar residues. Residues 452–463 (DTLEGEEDAEEA) are compositionally biased toward acidic residues. The stretch at 455–475 (EGEEDAEEAAAEKRGLQRRAT) forms a coiled coil. Thr-475 bears the Phosphothreonine mark. Basic and acidic residues-rich tracts occupy residues 479–494 (SELK…RRNE) and 570–580 (FAEDTLIPRED). A Phosphoserine modification is found at Ser-583. Residues 653–687 (RAHEEEEEEEEENRDEEEGEATTEEDDKEEAVASA) are a coiled coil. Residues 657–681 (EEEEEEEENRDEEEGEATTEEDDKE) are compositionally biased toward acidic residues. Phosphothreonine occurs at positions 674 and 675. Phosphoserine occurs at positions 694 and 750. The tract at residues 703–1215 (IEPARIEEEE…SLESISSIDR (513 aa)) is interaction with ARHGEF7. Residues 714-801 (TLTIVRQTGG…AVQMRVWRER (88 aa)) form the PDZ 1 domain. The segment at 714–1180 (TLTIVRQTGG…TVLVCDGFDT (467 aa)) is required for interaction with VIM. Thr-812 carries the phosphothreonine modification. A phosphoserine mark is found at Ser-821, Ser-861, and Ser-925. PDZ domains are found at residues 848–936 (AACL…ERET), 990–1079 (EICL…RRDP), and 1086–1180 (ELCI…GFDT). 8 positions are modified to phosphoserine: Ser-1126, Ser-1206, Ser-1209, Ser-1212, Ser-1218, Ser-1262, Ser-1265, and Ser-1284. Over residues 1213 to 1228 (IDRELSPEGPGKEKEL) the composition is skewed to basic and acidic residues. The interval 1213–1246 (IDRELSPEGPGKEKELASQALPWESESAETTGRN) is disordered. 2 disordered regions span residues 1263–1325 (AGSL…DELP) and 1341–1501 (VHPP…AERR). A compositionally biased stretch (polar residues) spans 1264 to 1277 (GSLQRGPSATTGGK). Lys-1291 is subject to Omega-N-methylarginine. Ala-1299 bears the Phosphoserine mark. Residue Arg-1312 is modified to Omega-N-methylarginine. A Phosphoserine modification is found at Ser-1320. Position 1353 is a phosphothreonine (Thr-1353). The residue at position 1359 (Ser-1359) is a Phosphoserine. Over residues 1364–1376 (SFRERQKYFELEV) the composition is skewed to basic and acidic residues. Phosphoserine is present on Ser-1389. A coiled-coil region spans residues 1390-1421 (LVGADDLRKMQEEEARKLQQKRAQMLREEAVT). Basic and acidic residues predominate over residues 1394 to 1406 (DDLRKMQEEEARK). Phosphoserine is present on residues Ser-1455 and Ser-1458. Residues 1471–1482 (AKAERRHQERLR) show a composition bias toward basic and acidic residues. Ser-1485, Ser-1496, and Ser-1518 each carry phosphoserine. The interval 1530 to 1577 (LSKSQEGRGKRGPLERLAEAPSPAPTPSPTPLEDFGLQTSASPGRLPL) is disordered. The span at 1534-1547 (QEGRGKRGPLERLA) shows a compositional bias: basic and acidic residues. Ser-1551 is modified (phosphoserine). Residue Thr-1555 is modified to Phosphothreonine. Ser-1557, Ser-1571, and Ser-1601 each carry phosphoserine. Residues 1632–1665 (GRPSPGAVGPEDMTLCSSRRSVRPGRRGLGPVPS) are disordered.

This sequence belongs to the LAP (LRR and PDZ) protein family. Interacts with UBE3A. Interacts with PAK1 and PAK2. Interacts (via PDZ domains) with VANGL2. Interacts (via PDZ domains) with LPP and TRIP6; the interaction is direct. Interacts (via PDZ domains) with TJP2. Interacts (via PDZ domains) with APC; may mediate APC targeting to adherens junctions of epithelial cells. Interacts (via PDZ domains) with TSHR; regulates TSHR trafficking and function. Interacts with ARHGEF7 and GIT1; interacts directly with ARHGEF7. Interacts with CTNNB1. Interacts with MAPK12. Interacts (via PDZ domains 1 and 3) with MCC. Interacts with DLG5. Interacts with STK4/MST1 and LATS1 in the presence of DLG5. Interacts (via PDZ domain 3) with CRTAM (via PDZ-binding motif); the interaction promotes CRTAM and SCRIB polarization in a subset of CD4+ T-cells. Interacts with YES1, when YES1 is in a closed conformation; the interaction facilitates YES1 autophosphorylation. Interacts (via PDZ domains) with VIM; the interaction protects SCRIB from proteasomal degradation and facilitates SCRIB localization to intermediate filaments, the interaction is reduced by cell contact inhibition. In terms of processing, ubiquitinated; targeted for UBE3A-dependent multiubiquitination and degraded. Post-translationally, palmitoylated. Could be depalmitoylated by LYPLA1 and/or LYPLA2. Palmitoylation of SCRIB by ZDHHC7 is required for its localization to cell-cell junctions, function in the establishement of epithelial cell polarity and the regulation of downstream signaling pathways important for epithelial cell differentiation. As to expression, expressed in CD4+ T-cells (at protein level). Found in a wide range of tissues including liver, kidney and spleen. Also expressed in the brain (at protein level).

Its subcellular location is the cell membrane. The protein resides in the cell junction. It is found in the adherens junction. It localises to the cell projection. The protein localises to the lamellipodium. Its subcellular location is the cytoplasm. The protein resides in the postsynapse. It is found in the presynapse. Its function is as follows. Scaffold protein involved in different aspects of polarized cell differentiation regulating epithelial and neuronal morphogenesis and T-cell polarization. Via its interaction with CRTAM, required for the late phase polarization of a subset of CD4+ T-cells, which in turn regulates TCR-mediated proliferation and IFNG and IL22 production. Plays a role in cell directional movement, cell orientation, cell sheet organization and Golgi complex polarization at the cell migration front. Promotes epithelial cell layer barrier function via maintaining cell-cell adhesion. Most probably functions in the establishment of apico-basal cell polarity. May function in cell proliferation regulating progression from G1 to S phase and as a positive regulator of apoptosis for instance during acinar morphogenesis of the mammary epithelium. May regulate cell invasion via MAPK-mediated cell migration and adhesion. May play a role in exocytosis and in the targeting of synaptic vesicles to synapses. Functions as an activator of Rac GTPase activity. The chain is Protein scribble homolog from Mus musculus (Mouse).